A 245-amino-acid chain; its full sequence is Fibroblast growth factor 13 (245 aa).

2 disordered regions span residues 1–37 (MAAAIASSLIRQKRQAREREKSNACKCVSSPSKSKGN) and 213–245 (TEFSRSGSGTPTKSRSVSGVLNGGKSMSQNDST). The interval 1-62 (MAAAIASSLI…GSKKRRRRRP (62 aa)) is mediates targeting to the nucleus. Residues 215–245 (FSRSGSGTPTKSRSVSGVLNGGKSMSQNDST) are compositionally biased toward polar residues.

This sequence belongs to the heparin-binding growth factors family.

The protein localises to the cell projection. The protein resides in the filopodium. It is found in the growth cone. It localises to the dendrite. Its subcellular location is the cell membrane. The protein localises to the sarcolemma. The protein resides in the cytoplasm. In terms of biological role, microtubule-binding protein which directly binds tubulin and is involved in both polymerization and stabilization of microtubules. Through its action on microtubules, may participate in the refinement of axons by negatively regulating axonal and leading processes branching. Plays a crucial role in neuron polarization and migration. Regulates voltage-gated sodium channel transport and function. Required for proper head development, it is involved in neural differentiation through regulation of the mek5-erk5 pathway. The chain is Fibroblast growth factor 13 (fgf13) from Xenopus laevis (African clawed frog).